Here is a 670-residue protein sequence, read N- to C-terminus: Protein HBS1 (670 aa).

Disordered regions lie at residues 60–88 (KDIQ…ESFQ) and 164–202 (KTVS…VSGR). The span at 63 to 75 (QEEEADEDEDEDA) shows a compositional bias: acidic residues. The span at 189–200 (PSPKVPSSPVVS) shows a compositional bias: low complexity. The tr-type G domain maps to 245–468 (KSHIHMIVIG…DVIENFKIPE (224 aa)). Residues 254–261 (GHVDAGKS) form a G1 region. 254 to 261 (GHVDAGKS) lines the GTP pocket. Residues 310–314 (GITMD) are G2. Positions 331–334 (DAPG) are G3. Residues 393-396 (NKLD) and 432-434 (SGL) each bind GTP. The segment at 393 to 396 (NKLD) is G4. The G5 stretch occupies residues 432 to 434 (SGL).

It belongs to the TRAFAC class translation factor GTPase superfamily. Classic translation factor GTPase family. In terms of assembly, component of the Pelota-HBS1L complex, also named Dom34-Hbs1 complex, composed of pelo and HBS1. As to expression, expressed in ovaries (at protein level).

Its subcellular location is the cytoplasm. It catalyses the reaction GTP + H2O = GDP + phosphate + H(+). Functionally, GTPase component of the Pelota-HBS1L complex, a complex that recognizes stalled ribosomes and triggers the No-Go Decay (NGD) pathway. The Pelota-HBS1L complex recognizes ribosomes stalled at the 3' end of an mRNA and engages stalled ribosomes by destabilizing mRNA in the mRNA channel. Following ribosome-binding, the Pelota-HBS1L complex promotes recruitment of pix, which drives the disassembly of stalled ribosomes, followed by degradation of damaged mRNAs as part of the NGD pathway. Together with pelo, required for transposon silencing in the ovary and testis. Together with pelo, promotes meiosis and spermatid individualization during spermatogenesis. The polypeptide is Protein HBS1 (Drosophila melanogaster (Fruit fly)).